A 154-amino-acid chain; its full sequence is Large ribosomal subunit protein uL15 (154 aa).

Residues 17 to 44 (KRVGRGIGSGTGKTGGRGVKGQRSRSGV) form a disordered region. Over residues 21 to 35 (RGIGSGTGKTGGRGV) the composition is skewed to gly residues.

It belongs to the universal ribosomal protein uL15 family. Part of the 50S ribosomal subunit.

In terms of biological role, binds to the 23S rRNA. The polypeptide is Large ribosomal subunit protein uL15 (Bartonella henselae (strain ATCC 49882 / DSM 28221 / CCUG 30454 / Houston 1) (Rochalimaea henselae)).